Here is a 176-residue protein sequence, read N- to C-terminus: PPE family protein PPE57 (176 aa).

The protein belongs to the mycobacterial PPE family. In terms of assembly, interacts with human TLR2.

The protein resides in the secreted. It is found in the cell wall. The protein localises to the cell surface. Functionally, plays a key role in regulating innate and adaptive immune responses through human Toll-like receptor 2 (TLR2). Interacts with TLR2, leading to the subsequent activation of the mitogen-activated protein kinase (MAPK) and nuclear factor kappa B (NF-kappa-B) signaling pathways. Induces macrophage activation by augmenting the expression of several cell surface molecules (CD40, CD80, CD86 and MHC class II) and pro-inflammatory cytokines (TNF-alpha, IL-6 and IL-12p40) within macrophages. Also participates in adaptive immunity by directing Th1-polarised immune responses. Stimulates specific humoral and cellular immune responses in tuberculosis (TB) patients. Induces a strong IgG(1) antibody response and an increased Th1/Th2 type immune response in mice. The chain is PPE family protein PPE57 from Mycobacterium tuberculosis (strain ATCC 25618 / H37Rv).